A 430-amino-acid polypeptide reads, in one-letter code: L-lysine N6-monooxygenase MbtG (430 aa).

A signal peptide spans 1–21 (MTATLAVIGAGPKAVAVAAKA).

Belongs to the lysine N(6)-hydroxylase/L-ornithine N(5)-oxygenase family. FAD is required as a cofactor.

The enzyme catalyses L-lysine + NADPH + O2 = N(6)-hydroxy-L-lysine + NADP(+) + H2O. The protein operates within siderophore biosynthesis; mycobactin biosynthesis. In terms of biological role, flavoprotein monooxygenase required for N-hydroxylation of the two acylated lysine residues during mycobactin assembly, thus producing the hydroxamate groups necessary for iron sequestration. Is also able, but less efficiently, to hydroxylate L-lysine (non acylated) in vitro. The polypeptide is L-lysine N6-monooxygenase MbtG (mbtG) (Mycobacterium sp. (strain MCS)).